A 195-amino-acid chain; its full sequence is 2-hydroxychromene-2-carboxylate isomerase (195 aa).

Serine 13 (nucleophile) is an active-site residue. Serine 13 contributes to the glutathione binding site. Substrate-binding positions include lysine 45 and 55 to 56; that span reads NR. 181-184 lines the glutathione pocket; it reads WGND.

This sequence belongs to the GST superfamily. NadH family. Glutathione serves as cofactor.

The catalysed reaction is 2-hydroxychromene-2-carboxylate = (3E)-4-(2-hydroxyphenyl)-2-oxobut-3-enoate. Its activity is regulated as follows. Activated by salicylate. Involved in the naphthalene and naphthalenesulfonate catabolic pathway. Catalyzes the reversible glutathione-dependent isomerization of 2-hydroxychromene-2-carboxylate (HCCA) to trans-O-hydroxybenzylidenepyruvate (THBPA). It can also use 2-hydroxybenzo[g]chromene-2-carboxylate as substrate. The sequence is that of 2-hydroxychromene-2-carboxylate isomerase (nsaD) from Sphingobium xenophagum.